Consider the following 424-residue polypeptide: Histidine--tRNA ligase (424 aa).

It belongs to the class-II aminoacyl-tRNA synthetase family. As to quaternary structure, homodimer.

Its subcellular location is the cytoplasm. It carries out the reaction tRNA(His) + L-histidine + ATP = L-histidyl-tRNA(His) + AMP + diphosphate + H(+). This chain is Histidine--tRNA ligase, found in Shewanella denitrificans (strain OS217 / ATCC BAA-1090 / DSM 15013).